We begin with the raw amino-acid sequence, 173 residues long: Translation initiation factor IF-3 (173 aa).

This sequence belongs to the IF-3 family. In terms of assembly, monomer.

The protein resides in the cytoplasm. Its function is as follows. IF-3 binds to the 30S ribosomal subunit and shifts the equilibrium between 70S ribosomes and their 50S and 30S subunits in favor of the free subunits, thus enhancing the availability of 30S subunits on which protein synthesis initiation begins. The polypeptide is Translation initiation factor IF-3 (Caulobacter sp. (strain K31)).